Here is a 137-residue protein sequence, read N- to C-terminus: Large ribosomal subunit protein uL16 (137 aa).

The tract at residues 1–20 is disordered; sequence MLQPSNRKYRKDFKGRNRGV. The span at 7 to 17 shows a compositional bias: basic residues; that stretch reads RKYRKDFKGRN.

Belongs to the universal ribosomal protein uL16 family. In terms of assembly, part of the 50S ribosomal subunit.

In terms of biological role, binds 23S rRNA and is also seen to make contacts with the A and possibly P site tRNAs. The sequence is that of Large ribosomal subunit protein uL16 from Coxiella burnetii (strain CbuG_Q212) (Coxiella burnetii (strain Q212)).